Consider the following 1976-residue polypeptide: Myosin-10 (1976 aa).

Arg18 is subject to Omega-N-methylarginine. The 51-residue stretch at 31–81 folds into the Myosin N-terminal SH3-like domain; the sequence is TAKKLVWIPSERHGFEAASIKEERGDEVMVELAENGKKAMVNKDDIQKMNP. Residues 85-783 form the Myosin motor domain; sequence SKVEDMAELT…VLAHLEEERD (699 aa). 178–185 contacts ATP; the sequence is GESGAGKT. Position 214 is a phosphoserine (Leu214). An N6-acetyllysine modification is found at Lys442. Residues 661–683 are actin-binding; it reads LTKLMATLRNTNPNFVRCIIPNH. The region spanning 786 to 815 is the IQ domain; sequence ITDIIIFFQAVCRGYLARKAFAKKQQQLSA. Positions 845–1976 form a coiled coil; the sequence is LQVTRQEEEL…VNETQPPQSE (1132 aa). Residues 1127-1147 are disordered; it reads FESEKASRNKAEKQKRDLSEE. Over residues 1129–1147 the composition is skewed to basic and acidic residues; sequence SEKASRNKAEKQKRDLSEE. The residue at position 1145 (Ser1145) is a Phosphoserine. 3 positions are modified to N6-acetyllysine: Lys1241, Lys1301, and Lys1645. Disordered regions lie at residues 1697 to 1728 and 1872 to 1976; these read ASSE…SALL and MEKA…PQSE. Basic and acidic residues predominate over residues 1698–1708; the sequence is SSERARRHAEQ. At Arg1930 the chain carries Omega-N-methylarginine. Ser1935, Ser1937, Ser1938, and Ser1939 each carry phosphoserine. At Arg1940 the chain carries Omega-N-methylarginine. 2 positions are modified to phosphoserine: Ser1952 and Ser1956. A Phosphothreonine modification is found at Thr1960. Residues 1967 to 1976 show a composition bias toward polar residues; sequence VNETQPPQSE. Ser1975 is subject to Phosphoserine.

The protein belongs to the TRAFAC class myosin-kinesin ATPase superfamily. Myosin family. In terms of assembly, myosin is a hexameric protein that consists of 2 heavy chain subunits (MHC), 2 alkali light chain subunits (MLC) and 2 regulatory light chain subunits (MLC-2). Interacts with PLEKHG6. Interacts with ECPAS. Interacts with KIF26B. Interacts with LARP6. Interacts with MCC. Interacts with CFAP95. (Microbial infection) Interacts with herpes simplex virus 1/HHV-1 envelope glycoprotein B. Post-translationally, phosphorylated by ABL2. As to expression, isoform 1 is expressed in cerebellum and spinal chord. Isoform 2 is expressed in cerebrum and retina. Isoform 3 is expressed in the cerebrum and to a much lower extent in cerebellum.

The protein resides in the cell projection. Its subcellular location is the lamellipodium. It is found in the cell membrane. Functionally, cellular myosin that appears to play a role in cytokinesis, cell shape, and specialized functions such as secretion and capping. Involved with LARP6 in the stabilization of type I collagen mRNAs for CO1A1 and CO1A2. During cell spreading, plays an important role in cytoskeleton reorganization, focal contacts formation (in the central part but not the margins of spreading cells), and lamellipodial extension; this function is mechanically antagonized by MYH9. In terms of biological role, (Microbial infection) Acts as a receptor for herpes simplex virus 1/HHV-1 envelope glycoprotein B. The protein is Myosin-10 (MYH10) of Homo sapiens (Human).